The primary structure comprises 193 residues: Probable gluconokinase (193 aa).

Position 18–25 (18–25) interacts with ATP; that stretch reads GTAGTGKS.

It belongs to the gluconokinase GntK/GntV family.

It localises to the cytoplasm. The enzyme catalyses D-gluconate + ATP = 6-phospho-D-gluconate + ADP + H(+). It functions in the pathway carbohydrate acid metabolism; D-gluconate degradation. The protein is Probable gluconokinase of Saccharomyces cerevisiae (strain ATCC 204508 / S288c) (Baker's yeast).